The primary structure comprises 203 residues: MARFRGSITKVSRRLGVALAPKAEKYLERRPYAPGEHGQSRRSKISEYALQLREKQKMKFLYGVLEKQFRNYYKKAVAQRGVTGDNLVKLLERRFDNVVFRAGFSPSRAGARQLVTHGHMLVNGRKVNIPSFLMKPGDAIEFREKSKNMDAVTESLNKAPESRIPSWIQVDKAHQKAVFLTVPEREEVQEPFNEQLVVELYSK.

Residues 93–154 (RRFDNVVFRA…KSKNMDAVTE (62 aa)) enclose the S4 RNA-binding domain.

The protein belongs to the universal ribosomal protein uS4 family. Part of the 30S ribosomal subunit. Contacts protein S5. The interaction surface between S4 and S5 is involved in control of translational fidelity.

In terms of biological role, one of the primary rRNA binding proteins, it binds directly to 16S rRNA where it nucleates assembly of the body of the 30S subunit. Its function is as follows. With S5 and S12 plays an important role in translational accuracy. The sequence is that of Small ribosomal subunit protein uS4 from Prosthecochloris aestuarii (strain DSM 271 / SK 413).